The following is a 366-amino-acid chain: Spermine synthase (366 aa).

N-acetylalanine is present on alanine 2. Serine 57 bears the Phosphoserine mark. A PABS domain is found at 122 to 362 (RYWPTADGRL…ELWVFYTVWK (241 aa)). Glutamine 148 serves as a coordination point for S-adenosyl 3-(methylsulfanyl)propylamine. Positions 177 and 201 each coordinate spermidine. S-adenosyl 3-(methylsulfanyl)propylamine is bound by residues glutamate 220 and 255 to 256 (DC). Aspartate 276 (proton acceptor) is an active-site residue. Tyrosine 351 and glutamate 353 together coordinate spermidine.

Belongs to the spermidine/spermine synthase family. In terms of assembly, homodimer. Dimerization is mediated through the N-terminal domain and seems to be required for activity as deletion of the N-terminal domain causes complete loss of activity.

The enzyme catalyses S-adenosyl 3-(methylsulfanyl)propylamine + spermidine = spermine + S-methyl-5'-thioadenosine + H(+). The protein operates within amine and polyamine biosynthesis; spermine biosynthesis; spermine from spermidine: step 1/1. Its function is as follows. Catalyzes the production of spermine from spermidine and decarboxylated S-adenosylmethionine (dcSAM). The protein is Spermine synthase of Homo sapiens (Human).